A 78-amino-acid polypeptide reads, in one-letter code: UPF0612 protein new22 (78 aa).

This sequence belongs to the UPF0612 family.

The polypeptide is UPF0612 protein new22 (new22) (Schizosaccharomyces pombe (strain 972 / ATCC 24843) (Fission yeast)).